Reading from the N-terminus, the 305-residue chain is Tetraacyldisaccharide 4'-kinase (305 aa).

ATP is bound at residue 39–46 (SVGGNGKT).

This sequence belongs to the LpxK family.

It carries out the reaction a lipid A disaccharide + ATP = a lipid IVA + ADP + H(+). Its pathway is glycolipid biosynthesis; lipid IV(A) biosynthesis; lipid IV(A) from (3R)-3-hydroxytetradecanoyl-[acyl-carrier-protein] and UDP-N-acetyl-alpha-D-glucosamine: step 6/6. Functionally, transfers the gamma-phosphate of ATP to the 4'-position of a tetraacyldisaccharide 1-phosphate intermediate (termed DS-1-P) to form tetraacyldisaccharide 1,4'-bis-phosphate (lipid IVA). The sequence is that of Tetraacyldisaccharide 4'-kinase from Pseudoalteromonas atlantica (strain T6c / ATCC BAA-1087).